The primary structure comprises 197 residues: Holliday junction branch migration complex subunit RuvA (197 aa).

The tract at residues 1–64 is domain I; sequence MYEYIKGTYM…EDFIGLYGFG (64 aa). Positions 65–143 are domain II; it reads SKEELELFNK…VNLDEGIQTD (79 aa). The interval 144 to 149 is flexible linker; that stretch reads SNDIKV. The tract at residues 149-197 is domain III; the sequence is VSSKILEEAKEALMSLGYSEKECEKALKNVEEKESLEIIIKESLKFLMN.

It belongs to the RuvA family. As to quaternary structure, homotetramer. Forms an RuvA(8)-RuvB(12)-Holliday junction (HJ) complex. HJ DNA is sandwiched between 2 RuvA tetramers; dsDNA enters through RuvA and exits via RuvB. An RuvB hexamer assembles on each DNA strand where it exits the tetramer. Each RuvB hexamer is contacted by two RuvA subunits (via domain III) on 2 adjacent RuvB subunits; this complex drives branch migration. In the full resolvosome a probable DNA-RuvA(4)-RuvB(12)-RuvC(2) complex forms which resolves the HJ.

The protein resides in the cytoplasm. Its function is as follows. The RuvA-RuvB-RuvC complex processes Holliday junction (HJ) DNA during genetic recombination and DNA repair, while the RuvA-RuvB complex plays an important role in the rescue of blocked DNA replication forks via replication fork reversal (RFR). RuvA specifically binds to HJ cruciform DNA, conferring on it an open structure. The RuvB hexamer acts as an ATP-dependent pump, pulling dsDNA into and through the RuvAB complex. HJ branch migration allows RuvC to scan DNA until it finds its consensus sequence, where it cleaves and resolves the cruciform DNA. The sequence is that of Holliday junction branch migration complex subunit RuvA from Hathewaya histolytica (Clostridium histolyticum).